The primary structure comprises 112 residues: Protein Churchill (112 aa).

Residues C2, C5, C30, C33, H59, C61, C64, H66, H71, C88, and C91 each contribute to the Zn(2+) site.

The protein belongs to the Churchill family.

In terms of biological role, transcriptional activator that mediates FGF signaling during neural development. Plays a role in the regulation of cell movement. Does not bind DNA by itself. The sequence is that of Protein Churchill (Churc1) from Mus musculus (Mouse).